Here is a 212-residue protein sequence, read N- to C-terminus: Thymidylate kinase (212 aa).

11-18 (GLEGAGKS) contacts ATP.

This sequence belongs to the thymidylate kinase family.

The enzyme catalyses dTMP + ATP = dTDP + ADP. In terms of biological role, phosphorylation of dTMP to form dTDP in both de novo and salvage pathways of dTTP synthesis. This Vibrio vulnificus (strain CMCP6) protein is Thymidylate kinase.